The chain runs to 106 residues: Large ribosomal subunit protein bL21 (106 aa).

It belongs to the bacterial ribosomal protein bL21 family. As to quaternary structure, part of the 50S ribosomal subunit. Contacts protein L20.

Functionally, this protein binds to 23S rRNA in the presence of protein L20. In Xanthomonas campestris pv. campestris (strain ATCC 33913 / DSM 3586 / NCPPB 528 / LMG 568 / P 25), this protein is Large ribosomal subunit protein bL21.